Here is a 238-residue protein sequence, read N- to C-terminus: MKYAGILAGGIGSRMGNVPLPKQFLDLDNKPILIHTLEKFILINDFEKIIIATPQQWMTHTKDTLRKFKISDERIEVIQGGSDRNDTIMNIVKHIESTNGINDDDVIVTHDAVRPFLTHRIIKENIQAALEYGAVDTVIDAIDTIVTSKDDQTIDAIPVRNEMYQGQTPQSFNINLLKESYAQLSDEQKSILSDACKIIVETNKPVRLVKGELYNIKVTTPYDLKVANAIIRGGIADD.

Residues 7–10 (LAGG) and 81–87 (GSDRNDT) contribute to the CTP site.

This sequence belongs to the IspD/TarI cytidylyltransferase family. TarI subfamily.

The enzyme catalyses D-ribitol 5-phosphate + CTP + H(+) = CDP-L-ribitol + diphosphate. It functions in the pathway cell wall biogenesis; poly(ribitol phosphate) teichoic acid biosynthesis. In terms of biological role, catalyzes the transfer of the cytidylyl group of CTP to D-ribitol 5-phosphate. The polypeptide is Ribitol-5-phosphate cytidylyltransferase 1 (Staphylococcus aureus (strain bovine RF122 / ET3-1)).